The chain runs to 217 residues: Protein-L-isoaspartate O-methyltransferase (217 aa).

Serine 62 is a catalytic residue.

The protein belongs to the methyltransferase superfamily. L-isoaspartyl/D-aspartyl protein methyltransferase family.

It localises to the cytoplasm. It carries out the reaction [protein]-L-isoaspartate + S-adenosyl-L-methionine = [protein]-L-isoaspartate alpha-methyl ester + S-adenosyl-L-homocysteine. Catalyzes the methyl esterification of L-isoaspartyl residues in peptides and proteins that result from spontaneous decomposition of normal L-aspartyl and L-asparaginyl residues. It plays a role in the repair and/or degradation of damaged proteins. This chain is Protein-L-isoaspartate O-methyltransferase, found in Trichlorobacter lovleyi (strain ATCC BAA-1151 / DSM 17278 / SZ) (Geobacter lovleyi).